Here is a 294-residue protein sequence, read N- to C-terminus: Potassium-transporting ATPase subunit beta (294 aa).

The Cytoplasmic segment spans residues 1–36; the sequence is MAALQEKKSCSQRMAEFRQYCWNPDTGQMLGRTPAR. Residues 37–57 form a helical; Signal-anchor for type II membrane protein membrane-spanning segment; sequence WVWISLYYAAFYVVMTGLFAL. Residues 58 to 294 are Extracellular-facing; that stretch reads CIYVLMQTID…KVEFKLTIQK (237 aa). Residues N99, N103, N130, N146, and N161 are each glycosylated (N-linked (GlcNAc...) asparagine). Cysteines 131 and 152 form a disulfide. C162 and C178 are disulfide-bonded. 2 N-linked (GlcNAc...) asparagine glycosylation sites follow: N193 and N225. The tract at residues 194-294 is immunoglobulin-like; it reads NTAPRVDCTF…KVEFKLTIQK (101 aa). Cysteines 201 and 266 form a disulfide.

Belongs to the X(+)/potassium ATPases subunit beta family. As to quaternary structure, the ATPase pump is composed of two subunits: alpha (catalytic) and beta (regulatory). Interacts with alpha subunit ATP12A; this interaction is required for the formation of a functionally active pump and targeting at the plasma membrane. Interacts (via N-terminus) with alpha subunit ATP4A (via the P-domain). In terms of processing, N-glycosylation is necessary for assembly and functional expression of the pump at the plasma membrane. Stomach.

Its subcellular location is the apical cell membrane. The protein resides in the cell membrane. Functionally, the beta subunit of the gastric H(+)/K(+) ATPase pump which transports H(+) ions in exchange for K(+) ions across the apical membrane of parietal cells. Plays a structural and regulatory role in the assembly and membrane targeting of a functionally active pump. Within a transport cycle, the transfer of a H(+) ion across the membrane is coupled to ATP hydrolysis and is associated with a transient phosphorylation of the alpha subunit that shifts the pump conformation from inward-facing (E1) to outward-facing state (E2). Interacts with the phosphorylation domain of the alpha subunit and functions as a ratchet, stabilizing the lumenal-open E2 conformation and preventing the reverse reaction of the transport cycle. The polypeptide is Potassium-transporting ATPase subunit beta (Atp4b) (Rattus norvegicus (Rat)).